Reading from the N-terminus, the 520-residue chain is Bifunctional dihydrofolate reductase-thymidylate synthase (520 aa).

The DHFR domain maps to 26-229 (AFSIVVALDM…LEFEICKYVP (204 aa)). Val-30 is a substrate binding site. NADP(+)-binding positions include Ala-32 and 38 to 44 (GIGDGES). Substrate is bound at residue Asp-52. NADP(+)-binding positions include 81 to 83 (RKT), 102 to 105 (LSSK), and 157 to 164 (GGAQVYAD). Residues Tyr-162 and Thr-180 each contribute to the substrate site. Positions 234–520 (ERQYLELIDR…HPAIKMEMAV (287 aa)) are thymidylate synthase. A dUMP-binding site is contributed by Arg-254. The active site involves Cys-400. Residues His-401, 421–425 (QRSCD), Asn-433, and 463–465 (HVY) each bind dUMP.

It in the N-terminal section; belongs to the dihydrofolate reductase family. This sequence in the C-terminal section; belongs to the thymidylate synthase family.

The catalysed reaction is (6S)-5,6,7,8-tetrahydrofolate + NADP(+) = 7,8-dihydrofolate + NADPH + H(+). The enzyme catalyses dUMP + (6R)-5,10-methylene-5,6,7,8-tetrahydrofolate = 7,8-dihydrofolate + dTMP. The protein operates within cofactor biosynthesis; tetrahydrofolate biosynthesis; 5,6,7,8-tetrahydrofolate from 7,8-dihydrofolate: step 1/1. Bifunctional enzyme. Involved in de novo dTMP biosynthesis. Key enzyme in folate metabolism. Catalyzes an essential reaction for de novo glycine and purine synthesis, DNA precursor synthesis, and for the conversion of dUMP to dTMP. The sequence is that of Bifunctional dihydrofolate reductase-thymidylate synthase from Leishmania major.